The chain runs to 258 residues: Small ribosomal subunit protein uS2 (258 aa).

The segment at 226 to 258 (QGVSNEEVAAEQNIDLDEKEKSEETEATEATEE) is disordered.

It belongs to the universal ribosomal protein uS2 family.

This chain is Small ribosomal subunit protein uS2, found in Staphylococcus aureus (strain COL).